The chain runs to 250 residues: Ribosomal RNA small subunit methyltransferase J (250 aa).

Residues 96–97 and Asp168 contribute to the S-adenosyl-L-methionine site; that span reads RD.

This sequence belongs to the methyltransferase superfamily. RsmJ family.

It localises to the cytoplasm. It carries out the reaction guanosine(1516) in 16S rRNA + S-adenosyl-L-methionine = N(2)-methylguanosine(1516) in 16S rRNA + S-adenosyl-L-homocysteine + H(+). In terms of biological role, specifically methylates the guanosine in position 1516 of 16S rRNA. This chain is Ribosomal RNA small subunit methyltransferase J, found in Neisseria meningitidis serogroup C (strain 053442).